Reading from the N-terminus, the 525-residue chain is GMP synthase [glutamine-hydrolyzing] (525 aa).

The region spanning 8–207 (KILILDFGSQ…ALDICGCAAN (200 aa)) is the Glutamine amidotransferase type-1 domain. Residue Cys85 is the Nucleophile of the active site. Active-site residues include His181 and Glu183. The GMPS ATP-PPase domain maps to 208–400 (WKPSSIIEDA…LGLPYNMLYR (193 aa)). Position 235-241 (235-241 (SGGVDSS)) interacts with ATP.

In terms of assembly, homodimer.

The enzyme catalyses XMP + L-glutamine + ATP + H2O = GMP + L-glutamate + AMP + diphosphate + 2 H(+). It participates in purine metabolism; GMP biosynthesis; GMP from XMP (L-Gln route): step 1/1. Catalyzes the synthesis of GMP from XMP. The chain is GMP synthase [glutamine-hydrolyzing] from Shewanella oneidensis (strain ATCC 700550 / JCM 31522 / CIP 106686 / LMG 19005 / NCIMB 14063 / MR-1).